The sequence spans 285 residues: SLAM family member 9 (285 aa).

The signal sequence occupies residues 1–17; sequence MGALLWSLLLLLQEAKG. Over 18 to 232 the chain is Extracellular; the sequence is FSGDDEDPEE…YPEKPSMLCL (215 aa). The Ig-like V-type domain maps to 25–126; that stretch reads PEEVIGVLQE…SHITKSYHLR (102 aa). 6 N-linked (GlcNAc...) asparagine glycosylation sites follow: Asn37, Asn97, Asn141, Asn149, Asn175, and Asn206. In terms of domain architecture, Ig-like C2-type spans 134–213; that stretch reads PHITVNSNIS…VSNISSRRIS (80 aa). Residues Cys154 and Cys198 are joined by a disulfide bond. Residues 233–253 traverse the membrane as a helical segment; it reads LVKSLFLLLLLAILTVGLCLF. The Cytoplasmic segment spans residues 254–285; sequence RAQKSYETPRVRKLKRNRIKLRKKGKSGPTPV.

The protein localises to the membrane. May play a role in the immune response. The chain is SLAM family member 9 (Slamf9) from Mus musculus (Mouse).